Consider the following 530-residue polypeptide: CTP synthase (530 aa).

The interval 1–264 is amidoligase domain; that stretch reads MPKLIIVTGG…GDFLTRRLRL (264 aa). Serine 13 provides a ligand contact to CTP. Serine 13 contributes to the UTP binding site. 14 to 19 provides a ligand contact to ATP; the sequence is GVGKGV. Residue tyrosine 54 participates in L-glutamine binding. Aspartate 71 lines the ATP pocket. Residues aspartate 71 and glutamate 139 each coordinate Mg(2+). CTP-binding positions include 146–148, 185–190, and lysine 221; these read DYE and KTKPLQ. UTP-binding positions include 185-190 and lysine 221; that span reads KTKPLQ. Residues 289-530 enclose the Glutamine amidotransferase type-1 domain; sequence SVGMCGKYVE…LLKAALFAKR (242 aa). Glycine 351 is an L-glutamine binding site. The active-site Nucleophile; for glutamine hydrolysis is cysteine 378. Residues 379-382, glutamate 402, and arginine 459 each bind L-glutamine; that span reads FGMQ. Active-site residues include histidine 504 and glutamate 506.

It belongs to the CTP synthase family. In terms of assembly, homotetramer.

The enzyme catalyses UTP + L-glutamine + ATP + H2O = CTP + L-glutamate + ADP + phosphate + 2 H(+). It carries out the reaction L-glutamine + H2O = L-glutamate + NH4(+). It catalyses the reaction UTP + NH4(+) + ATP = CTP + ADP + phosphate + 2 H(+). Its pathway is pyrimidine metabolism; CTP biosynthesis via de novo pathway; CTP from UDP: step 2/2. Its activity is regulated as follows. Allosterically activated by GTP, when glutamine is the substrate; GTP has no effect on the reaction when ammonia is the substrate. The allosteric effector GTP functions by stabilizing the protein conformation that binds the tetrahedral intermediate(s) formed during glutamine hydrolysis. Inhibited by the product CTP, via allosteric rather than competitive inhibition. In terms of biological role, catalyzes the ATP-dependent amination of UTP to CTP with either L-glutamine or ammonia as the source of nitrogen. Regulates intracellular CTP levels through interactions with the four ribonucleotide triphosphates. The protein is CTP synthase of Pyrobaculum aerophilum (strain ATCC 51768 / DSM 7523 / JCM 9630 / CIP 104966 / NBRC 100827 / IM2).